We begin with the raw amino-acid sequence, 374 residues long: Succinyl-diaminopimelate desuccinylase (374 aa).

His-66 provides a ligand contact to Zn(2+). Asp-68 is a catalytic residue. Asp-99 serves as a coordination point for Zn(2+). The Proton acceptor role is filled by Glu-133. The Zn(2+) site is built by Glu-134, Glu-162, and His-348.

This sequence belongs to the peptidase M20A family. DapE subfamily. Homodimer. Zn(2+) serves as cofactor. It depends on Co(2+) as a cofactor.

The enzyme catalyses N-succinyl-(2S,6S)-2,6-diaminopimelate + H2O = (2S,6S)-2,6-diaminopimelate + succinate. It functions in the pathway amino-acid biosynthesis; L-lysine biosynthesis via DAP pathway; LL-2,6-diaminopimelate from (S)-tetrahydrodipicolinate (succinylase route): step 3/3. Functionally, catalyzes the hydrolysis of N-succinyl-L,L-diaminopimelic acid (SDAP), forming succinate and LL-2,6-diaminopimelate (DAP), an intermediate involved in the bacterial biosynthesis of lysine and meso-diaminopimelic acid, an essential component of bacterial cell walls. The chain is Succinyl-diaminopimelate desuccinylase from Coxiella burnetii (strain RSA 331 / Henzerling II).